The sequence spans 233 residues: Small ribosomal subunit protein uS2c (233 aa).

Belongs to the universal ribosomal protein uS2 family.

The protein localises to the plastid. It is found in the chloroplast. This Galdieria sulphuraria (Red alga) protein is Small ribosomal subunit protein uS2c (rps2).